A 1229-amino-acid polypeptide reads, in one-letter code: ABC transporter B family member 3 (1229 aa).

Residues 22–42 (VLLMIVGSIGAIGNGVGFPLM) form a helical membrane-spanning segment. The 289-residue stretch at 25 to 313 (MIVGSIGAIG…TTPCLTAFAA (289 aa)) folds into the ABC transmembrane type-1 1 domain. The N-linked (GlcNAc...) asparagine glycan is linked to Asn-56. 5 consecutive transmembrane segments (helical) span residues 73-93 (FVYLGLGTLGAAFLQVACWMI), 149-169 (FIQLIATFVGGFVLAFVKGWL), 172-192 (LVMLVSIPLLAIAGAAMPIIV), 252-272 (GLGLGVVFFVFFCSYALAIWF), and 281-301 (GYTGGEVVNVMVTVVASSMSL). The 237-residue stretch at 348–584 (IELRDVCFSY…HEGAYAQLIR (237 aa)) folds into the ABC transporter 1 domain. 383 to 390 (GESGSGKS) is a binding site for ATP. Residue Asn-450 is glycosylated (N-linked (GlcNAc...) asparagine). Positions 594–606 (RLESSNELRDRSI) are enriched in basic and acidic residues. The disordered stretch occupies residues 594-614 (RLESSNELRDRSINRGSSRNI). An N-linked (GlcNAc...) asparagine glycan is attached at Asn-645. 2 consecutive transmembrane segments (helical) span residues 661-681 (ILILGTLLGAVNGTIFPIFGI) and 706-726 (MIFVLLGVASLIVYPMHTYLF). An ABC transmembrane type-1 2 domain is found at 662 to 949 (LILGTLLGAV…ASSFAPDSSK (288 aa)). Asn-758 carries N-linked (GlcNAc...) asparagine glycosylation. The next 3 membrane-spanning stretches (helical) occupy residues 797–817 (IIAFTASWKLAVIILVMIPLI), 888–908 (GVGFGISFFVLYSVYASCFYV), and 923–943 (VFQVFLALTMTAIGISQASSF). One can recognise an ABC transporter 2 domain in the interval 984–1222 (IELCHISFTY…EGGVYASLVQ (239 aa)). 1019 to 1026 (GESGSGKS) provides a ligand contact to ATP. 2 N-linked (GlcNAc...) asparagine glycosylation sites follow: Asn-1073 and Asn-1173.

It belongs to the ABC transporter superfamily. ABCB family. Multidrug resistance exporter (TC 3.A.1.201) subfamily.

The protein resides in the membrane. The chain is ABC transporter B family member 3 (ABCB3) from Arabidopsis thaliana (Mouse-ear cress).